The sequence spans 994 residues: Sarcoplasmic/endoplasmic reticulum calcium ATPase 1 (994 aa).

Over 1 to 48 (MEAAHSKSTEECLSYFGVSETTGLTPDQVKRHLEKYGPNELPAEEGKS) the chain is Cytoplasmic. The chain crosses the membrane as a helical span at residues 49–69 (LWELVVEQFEDLLVRILLLAA). The Lumenal segment spans residues 70 to 89 (CISFVLAWFEEGEETVTAFV). Residues 90-110 (EPFVILLILIANAIVGVWQER) form a helical membrane-spanning segment. At 111–253 (NAENAIEALK…QDKTPLQQKL (143 aa)) the chain is on the cytoplasmic side. The chain crosses the membrane as a helical span at residues 254–273 (DEFGEQLSKVISLICVAVWL). The Lumenal portion of the chain corresponds to 274-295 (INIGHFNDPVHGGSWFRGAIYY). The chain crosses the membrane as a helical span at residues 296–313 (FKIAVALAVAAIPEGLPA). 4 residues coordinate Ca(2+): V304, A305, I307, and E309. Residues 314–757 (VITTCLALGT…EEGRAIYNNM (444 aa)) lie on the Cytoplasmic side of the membrane. Residue D351 is the 4-aspartylphosphate intermediate of the active site. Residues D351 and T353 each contribute to the Mg(2+) site. T353 contributes to the ATP binding site. The residue at position 441 (T441) is a Phosphothreonine. ATP is bound by residues E442, R489, K515, and R560. At T569 the chain carries Phosphothreonine. S581 is subject to Phosphoserine. Residues T625, G626, and D627 each coordinate ATP. S643 carries the post-translational modification Phosphoserine. Residues R678 and K684 each contribute to the ATP site. D703 provides a ligand contact to Mg(2+). N706 lines the ATP pocket. Residues 758–777 (KQFIRYLISSNVGEVVCIFL) traverse the membrane as a helical segment. Ca(2+)-binding residues include N768 and E771. Over 778–787 (TAALGLPEAL) the chain is Lumenal. The chain crosses the membrane as a helical span at residues 788–808 (IPVQLLWVNLVTDGLPATALG). The interaction with PLN stretch occupies residues 788-808 (IPVQLLWVNLVTDGLPATALG). Residues N796, T799, and D800 each coordinate Ca(2+). Residues 809-828 (FNPPDLDIMDRPPRSPKEPL) are Cytoplasmic-facing. Residues 829 to 851 (ISGWLFFRYMAIGGYVGAATVGA) form a helical membrane-spanning segment. The Lumenal portion of the chain corresponds to 852–897 (AAWWFLYAEDGPHVSYHQLTHFMQCTEHNPEFDGLDCEVFEAPEPM). C876 and C888 are disulfide-bonded. Residues 898–917 (TMALSVLVTIEMCNALNSLS) form a helical membrane-spanning segment. E908 contacts Ca(2+). The Cytoplasmic segment spans residues 918–930 (ENQSLLRMPPWVN). A helical membrane pass occupies residues 931-949 (IWLLGSICLSMSLHFLILY). The segment at 932–943 (WLLGSICLSMSL) is interaction with PLN. The Lumenal segment spans residues 950–964 (VDPLPMIFKLRALDF). A helical membrane pass occupies residues 965 to 985 (TQWLMVLKISLPVIGLDELLK). At 986 to 994 (FIARNYLEG) the chain is on the cytoplasmic side.

It belongs to the cation transport ATPase (P-type) (TC 3.A.3) family. Type IIA subfamily. Interacts with sarcolipin (SLN). Interacts with phospholamban (PLN). Interacts with myoregulin (MRLN). Interacts with DWORF. Interacts with VMP1. Mg(2+) is required as a cofactor.

The protein resides in the endoplasmic reticulum membrane. The protein localises to the sarcoplasmic reticulum membrane. It carries out the reaction Ca(2+)(in) + ATP + H2O = Ca(2+)(out) + ADP + phosphate + H(+). Its activity is regulated as follows. Inhibited by sarcolipin (SLN) and myoregulin (MRLN). Has also been shown to be reversibly inhibited by phospholamban (PLN) at low calcium concentrations in vitro. Dephosphorylated PLN decreases the apparent affinity of the ATPase for calcium in vitro and this inhibition is regulated by the phosphorylation of PLN. Enhanced by DWORF; DWORF increases activity by displacing sarcolipin (SLN), phospholamban (PLN) and myoregulin (MRLN). Its function is as follows. Key regulator of striated muscle performance by acting as the major Ca(2+) ATPase responsible for the reuptake of cytosolic Ca(2+) into the sarcoplasmic reticulum. Catalyzes the hydrolysis of ATP coupled with the translocation of calcium from the cytosol to the sarcoplasmic reticulum lumen. Contributes to calcium sequestration involved in muscular excitation/contraction. The polypeptide is Sarcoplasmic/endoplasmic reticulum calcium ATPase 1 (Atp2a1) (Mus musculus (Mouse)).